Here is a 57-residue protein sequence, read N- to C-terminus: Small ribosomal subunit protein eS27 (57 aa).

Zn(2+)-binding residues include Cys-10, Cys-13, Cys-29, and Cys-32. A C4-type zinc finger spans residues 10–32; the sequence is CDDCENEQVLFGKAANTVNCAVC.

Belongs to the eukaryotic ribosomal protein eS27 family. In terms of assembly, part of the 30S ribosomal subunit. The cofactor is Zn(2+).

In Natronomonas pharaonis (strain ATCC 35678 / DSM 2160 / CIP 103997 / JCM 8858 / NBRC 14720 / NCIMB 2260 / Gabara) (Halobacterium pharaonis), this protein is Small ribosomal subunit protein eS27.